Here is a 366-residue protein sequence, read N- to C-terminus: MEKHIILLPGDGIGREIIDSAKQVLTAIASEYNHRFTFEEHAIGGSAIDEYGTPLPDKTVDACSKADAILLGAVGGPKWDANPSHLRPEKGLLGIRKQLGLFANLRPVKTISSLLYASPLKEEIVSQADMLIIRELTGGIYFGTPSERTTNGVVDTLQYSREEIERIVERGFEAARIRKKHLTSVDKANVLESSKLWREIVEEKSKDYPDVAVNHLLVDAAAMKLVTQPSFFDVIVTENLFGDILSDEASVLTGSLGMLPSASLRADGLGLYEPVHGSAPDIAGKGIANPLAMILSAALMLEHSFGLVDEAKEIERAVNDCLLQGFHTADIHIPGGVQVGTKQMTDAVLENVTTKSISDSICSSYV.

76–89 serves as a coordination point for NAD(+); that stretch reads GPKWDANPSHLRPE. Positions 96, 106, 134, and 219 each coordinate substrate. Residues aspartate 219, aspartate 243, and aspartate 247 each contribute to the Mg(2+) site. NAD(+) is bound at residue 277–289; sequence GSAPDIAGKGIAN.

This sequence belongs to the isocitrate and isopropylmalate dehydrogenases family. LeuB type 1 subfamily. Homodimer. Requires Mg(2+) as cofactor. Mn(2+) is required as a cofactor.

It is found in the cytoplasm. The enzyme catalyses (2R,3S)-3-isopropylmalate + NAD(+) = 4-methyl-2-oxopentanoate + CO2 + NADH. It participates in amino-acid biosynthesis; L-leucine biosynthesis; L-leucine from 3-methyl-2-oxobutanoate: step 3/4. Functionally, catalyzes the oxidation of 3-carboxy-2-hydroxy-4-methylpentanoate (3-isopropylmalate) to 3-carboxy-4-methyl-2-oxopentanoate. The product decarboxylates to 4-methyl-2 oxopentanoate. In Oceanobacillus iheyensis (strain DSM 14371 / CIP 107618 / JCM 11309 / KCTC 3954 / HTE831), this protein is 3-isopropylmalate dehydrogenase.